A 148-amino-acid polypeptide reads, in one-letter code: Wheatwin-2 (148 aa).

Positions 1–23 (MTMAARLMLVAALLCAAAAAATA) are cleaved as a signal peptide. Residue Gln-24 is modified to Pyrrolidone carboxylic acid. Positions 24-148 (QQATNVRATY…VNYQFVDCRD (125 aa)) constitute a Barwin domain. 3 disulfides stabilise this stretch: Cys-54/Cys-86, Cys-75/Cys-109, and Cys-89/Cys-146.

Monomer.

Functionally, shows antifungal activity towards B.cinerea and towards the wheat-specific pathogenic fungi F.culmorum and F.graminearum (groups 1 and 2). The chain is Wheatwin-2 (PR4B) from Triticum aestivum (Wheat).